The sequence spans 867 residues: Replication origin-binding protein (867 aa).

The segment at methionine 1–aspartate 39 is disordered. Over residues arginine 15 to glycine 28 the composition is skewed to low complexity. Residues alanine 86–histidine 251 form the Helicase ATP-binding domain. Alanine 99–threonine 106 is an ATP binding site.

It belongs to the herpesviridae OriBP family. As to quaternary structure, homodimer. Interacts with the major DNA-binding protein ICP8. Interacts with the helicase/primase component UL8 and the polymerase accessory protein UL42.

It localises to the host nucleus. In terms of biological role, functions as a docking protein to recruit essential components of the viral replication machinery to viral DNA origins. In the presence of the major DNA-binding protein, opens dsDNA leading to a conformational change in the origin that facilitates DNA unwinding and subsequent replication. This is Replication origin-binding protein from Human herpesvirus 2 (strain HG52) (HHV-2).